We begin with the raw amino-acid sequence, 383 residues long: S-adenosylmethionine synthase (383 aa).

H15 lines the ATP pocket. D17 is a Mg(2+) binding site. E43 is a binding site for K(+). L-methionine-binding residues include E56 and Q99. Residues 99-109 (QSSDINQGVDR) are flexible loop. Residues 164-166 (DAK), 230-231 (RF), D239, 245-246 (RK), A262, and K266 contribute to the ATP site. D239 lines the L-methionine pocket. An L-methionine-binding site is contributed by K270.

The protein belongs to the AdoMet synthase family. Homotetramer; dimer of dimers. Mg(2+) is required as a cofactor. Requires K(+) as cofactor.

It localises to the cytoplasm. It carries out the reaction L-methionine + ATP + H2O = S-adenosyl-L-methionine + phosphate + diphosphate. The protein operates within amino-acid biosynthesis; S-adenosyl-L-methionine biosynthesis; S-adenosyl-L-methionine from L-methionine: step 1/1. Functionally, catalyzes the formation of S-adenosylmethionine (AdoMet) from methionine and ATP. The overall synthetic reaction is composed of two sequential steps, AdoMet formation and the subsequent tripolyphosphate hydrolysis which occurs prior to release of AdoMet from the enzyme. This Mannheimia succiniciproducens (strain KCTC 0769BP / MBEL55E) protein is S-adenosylmethionine synthase.